We begin with the raw amino-acid sequence, 376 residues long: UPF0284 protein glr4139 (376 aa).

Belongs to the UPF0284 family.

The polypeptide is UPF0284 protein glr4139 (Gloeobacter violaceus (strain ATCC 29082 / PCC 7421)).